A 611-amino-acid chain; its full sequence is ATP-dependent zinc metalloprotease FtsH (611 aa).

Methionine 1 is a topological domain (cytoplasmic). Residues 2–22 traverse the membrane as a helical segment; sequence VKNLIFWLVITVVLMSIFQNF. The Extracellular portion of the chain corresponds to 23-98; sequence NTNDVNNHKV…IGAIPEEPSL (76 aa). Residues 99–119 form a helical membrane-spanning segment; that stretch reads FISILISWFPMLLLIGVWIFF. The Cytoplasmic segment spans residues 120–611; it reads MRQMQMGGGK…KGWIETDTNK (492 aa). 192–199 is an ATP binding site; sequence GPPGTGKT. Residue histidine 414 coordinates Zn(2+). Glutamate 415 is an active-site residue. 2 residues coordinate Zn(2+): histidine 418 and aspartate 492.

It in the central section; belongs to the AAA ATPase family. In the C-terminal section; belongs to the peptidase M41 family. As to quaternary structure, homohexamer. The cofactor is Zn(2+).

The protein resides in the cell membrane. In terms of biological role, acts as a processive, ATP-dependent zinc metallopeptidase for both cytoplasmic and membrane proteins. Plays a role in the quality control of integral membrane proteins. This chain is ATP-dependent zinc metalloprotease FtsH, found in Buchnera aphidicola subsp. Acyrthosiphon pisum (strain APS) (Acyrthosiphon pisum symbiotic bacterium).